The chain runs to 353 residues: Beta-agarase B (353 aa).

An N-terminal signal peptide occupies residues 1-17; sequence MYLIYLRLVFCCALLLG. The N-palmitoyl cysteine moiety is linked to residue C18. A lipid anchor (S-diacylglycerol cysteine) is attached at C18. A disordered region spans residues 30–58; sequence LPVEQEQEQETEQEGEPEESSEQDLVEEV. The segment covering 32–58 has biased composition (acidic residues); the sequence is VEQEQEQETEQEGEPEESSEQDLVEEV. Positions 58-353 constitute a GH16 domain; that stretch reads VDWKDIPVPA…WIRIYKPVEK (296 aa). Substrate contacts are provided by residues 105 to 107 and D181; that span reads YHN. E184 serves as the catalytic Nucleophile. E189 acts as the Proton donor in catalysis. 5 residues coordinate substrate: H215, R219, D224, Q226, and E308.

This sequence belongs to the glycosyl hydrolase 16 family. As to quaternary structure, homodimer.

The protein localises to the cell outer membrane. It carries out the reaction Hydrolysis of (1-&gt;4)-beta-D-galactosidic linkages in agarose, giving the tetramer as the predominant product.. In terms of biological role, cleaves the beta-1,4-linkages between beta-D-galactose and alpha-L-3,6-anhydro-galactose residues in agarose. Cleaves agarose in a random manner with retention of the anomeric-bond configuration, producing beta-anomers that give rise progressively to alpha-anomers when mutarotation takes place. Also tolerant to hybrid substrates containing C6-sulfate groups at the -4, +1, and +3 positions. This chain is Beta-agarase B (agaB), found in Zobellia galactanivorans (strain DSM 12802 / CCUG 47099 / CIP 106680 / NCIMB 13871 / Dsij).